A 1032-amino-acid chain; its full sequence is Exportin-T (1032 aa).

Belongs to the exportin family.

It localises to the nucleus. It is found in the cytoplasm. In terms of biological role, tRNA nucleus export receptor which facilitates tRNA translocation across the nuclear pore complex. Involved in pre-tRNA splicing, probably by affecting the interaction of pre-tRNA with splicing endonuclease. The sequence is that of Exportin-T (los1) from Aspergillus fumigatus (strain CBS 144.89 / FGSC A1163 / CEA10) (Neosartorya fumigata).